The following is a 336-amino-acid chain: Probable tRNA pseudouridine synthase B (336 aa).

Residue Asp81 is the Nucleophile of the active site. The PUA domain maps to 248 to 323; sequence LKKVVVKDSA…VAVDVERVYM (76 aa).

Belongs to the pseudouridine synthase TruB family. Type 2 subfamily.

It carries out the reaction uridine(55) in tRNA = pseudouridine(55) in tRNA. Could be responsible for synthesis of pseudouridine from uracil-55 in the psi GC loop of transfer RNAs. This chain is Probable tRNA pseudouridine synthase B, found in Methanocaldococcus jannaschii (strain ATCC 43067 / DSM 2661 / JAL-1 / JCM 10045 / NBRC 100440) (Methanococcus jannaschii).